A 462-amino-acid chain; its full sequence is Gamma-glutamylethanolamide synthetase GlnA4 (462 aa).

The 97-residue stretch at 30–126 (GDIDTVVLAF…AVADLAWEDG (97 aa)) folds into the GS beta-grasp domain. In terms of domain architecture, GS catalytic spans 133–462 (PRQILRRQLE…WELRRSFERM (330 aa)). The Mg(2+) site is built by Glu156 and Glu158. Residue Glu214 coordinates ATP. Residues Glu219 and Glu226 each coordinate Mg(2+). Gly270 provides a ligand contact to L-glutamate. Position 274 (His274) interacts with Mg(2+). 276 to 278 (HLS) contributes to the ATP binding site. Residues Arg325 and Arg343 each contribute to the L-glutamate site. ATP is bound by residues Arg343 and Arg348. Glu359 is a Mg(2+) binding site. Arg361 contacts L-glutamate.

It belongs to the glutamine synthetase family. Requires Mg(2+) as cofactor.

The catalysed reaction is ethanolamine + L-glutamate + ATP = gamma-L-glutamylethanolamide + ADP + phosphate + H(+). It functions in the pathway amine and polyamine degradation; ethanolamine degradation. Its activity is regulated as follows. Very slightly decreased activity with glutamine synthetase (GS) inhibitor methionine sulfoximine (MSO). Functionally, involved in the catabolism of monoamine ethanolamine. Catalyzes the ATP-dependent gamma-glutamylation of ethanolamine. No activity with polyamines. No complementation of the L-glutamine auxotrophy of an E.coli glnA mutant. Enables survival of S.coelicolor under high local environmental ethanolamine conditions. May play a role during starvation conditions to limit intracellular ethanolamine concentration, which in excess is toxic to the cells. This is Gamma-glutamylethanolamide synthetase GlnA4 from Streptomyces coelicolor (strain ATCC BAA-471 / A3(2) / M145).